We begin with the raw amino-acid sequence, 169 residues long: Protein YABBY 7 (169 aa).

The C4-type zinc-finger motif lies at 21–48 (CSFCATVLLVSVPCSSVLRVVAVQCGHC). Residues 63-122 (SASIELTPQELDAGPPPGEYSDESSGDDREGRDAEDDAPAPAAAAVANKPPGRKQRTPSA) are disordered.

Belongs to the YABBY family. As to expression, expressed in leaf sheaths and flowers.

The protein resides in the nucleus. In Oryza sativa subsp. japonica (Rice), this protein is Protein YABBY 7 (YAB7).